The chain runs to 329 residues: Beta-ketoacyl-[acyl-carrier-protein] synthase III (329 aa).

Residues cysteine 113 and histidine 256 contribute to the active site. Positions 257–261 (QANQR) are ACP-binding. Asparagine 286 is a catalytic residue.

This sequence belongs to the thiolase-like superfamily. FabH family. Homodimer.

The protein resides in the cytoplasm. The catalysed reaction is malonyl-[ACP] + acetyl-CoA + H(+) = 3-oxobutanoyl-[ACP] + CO2 + CoA. It participates in lipid metabolism; fatty acid biosynthesis. Its function is as follows. Catalyzes the condensation reaction of fatty acid synthesis by the addition to an acyl acceptor of two carbons from malonyl-ACP. Catalyzes the first condensation reaction which initiates fatty acid synthesis and may therefore play a role in governing the total rate of fatty acid production. Possesses both acetoacetyl-ACP synthase and acetyl transacylase activities. Its substrate specificity determines the biosynthesis of branched-chain and/or straight-chain of fatty acids. The polypeptide is Beta-ketoacyl-[acyl-carrier-protein] synthase III (Natranaerobius thermophilus (strain ATCC BAA-1301 / DSM 18059 / JW/NM-WN-LF)).